Consider the following 223-residue polypeptide: Large ribosomal subunit protein uL3 (223 aa).

This sequence belongs to the universal ribosomal protein uL3 family. Part of the 50S ribosomal subunit. Forms a cluster with proteins L14 and L19.

Functionally, one of the primary rRNA binding proteins, it binds directly near the 3'-end of the 23S rRNA, where it nucleates assembly of the 50S subunit. This chain is Large ribosomal subunit protein uL3, found in Cutibacterium acnes (strain DSM 16379 / KPA171202) (Propionibacterium acnes).